A 678-amino-acid chain; its full sequence is Probable 3',5'-cyclic phosphodiesterase pde-3 (678 aa).

Disordered stretches follow at residues 1-27 (MSPG…FQPT), 52-95 (AEMR…VLGG), and 223-250 (TVPA…NEHE). Residues 7–19 (AVGGVSPPVMVPG) show a composition bias toward low complexity. Polar residues-rich tracts occupy residues 60-85 (TATS…NSGV) and 231-246 (ARSS…PSNN). The region spanning 281–632 (RYDTRELDTD…RKWKEQIELE (352 aa)) is the PDEase domain. The active-site Proton donor is His356. Positions 360, 421, 422, and 531 each coordinate a divalent metal cation. A disordered region spans residues 654–678 (EEESASTSDSPDPRRDSPLDSDLSQ).

Belongs to the cyclic nucleotide phosphodiesterase family. A divalent metal cation is required as a cofactor.

The catalysed reaction is a nucleoside 3',5'-cyclic phosphate + H2O = a nucleoside 5'-phosphate + H(+). In Caenorhabditis elegans, this protein is Probable 3',5'-cyclic phosphodiesterase pde-3 (pde-3).